The chain runs to 63 residues: H/ACA ribonucleoprotein complex subunit 3-like protein (63 aa).

A disordered region spans residues 18–40 (KMDPEGKPTLSAHPARFSPDDKY).

It belongs to the NOP10 family. Component of the small nucleolar ribonucleoprotein particles containing H/ACA-type snoRNAs (H/ACA snoRNPs).

The protein resides in the nucleus. It is found in the nucleolus. Required for ribosome biogenesis. Part of a complex which catalyzes pseudouridylation of rRNA. This involves the isomerization of uridine such that the ribose is subsequently attached to C5, instead of the normal N1. Pseudouridine ('psi') residues may serve to stabilize the conformation of rRNAs. In Trypanosoma cruzi, this protein is H/ACA ribonucleoprotein complex subunit 3-like protein.